A 44-amino-acid polypeptide reads, in one-letter code: Large ribosomal subunit protein bL34 (44 aa).

Belongs to the bacterial ribosomal protein bL34 family.

The chain is Large ribosomal subunit protein bL34 from Neorickettsia sennetsu (strain ATCC VR-367 / Miyayama) (Ehrlichia sennetsu).